The chain runs to 230 residues: Aspartate and serine-rich protein (230 aa).

N-linked (GlcNAc...) asparagine glycans are attached at residues Asn17, Asn132, and Asn139. The segment at 112-230 (LNGGATAGGV…DSDSNDTDSD (119 aa)) is disordered. The span at 126 to 140 (DTDESSNDTDEDSND) shows a compositional bias: acidic residues. Over residues 141–161 (SDSKDTDSDSKDTDSDSKDSD) the composition is skewed to basic and acidic residues. N-linked (GlcNAc...) asparagine glycosylation is found at Asn163 and Asn170. A compositionally biased stretch (basic and acidic residues) spans 173–223 (DSKDTDSDSKDSDSKDTDSDSKDTDSDSKDSDSKDTDSDSKDTDSDSKDSD). An N-linked (GlcNAc...) asparagine glycan is attached at Asn225.

Component of the acid-insoluble organic matrix of calcified layers of the shell (at protein level).

The protein resides in the secreted. This chain is Aspartate and serine-rich protein, found in Lottia gigantea (Giant owl limpet).